Here is a 446-residue protein sequence, read N- to C-terminus: Coagulation factor VII (446 aa).

An N-terminal signal peptide occupies residues 1-24 (MVPQTHGLLLLYFLLQLQGPLGAV). The propeptide occupies 25 to 41 (VFITQEEAHGVLHRQRR). The Gla domain maps to 42-86 (ANSLLEELWSSSLERECNEERCSFEEAREIFKSPERTKQFWTIYS). A 4-carboxyglutamate mark is found at glutamate 47, glutamate 48, glutamate 55, glutamate 57, glutamate 60, glutamate 61, glutamate 66, glutamate 67, glutamate 70, and glutamate 76. A disulfide bridge links cysteine 58 with cysteine 63. Residues 87 to 123 (DGDQCASNPCQNGGTCQDHLKSYVCFCPLDFEGRNCE) form the EGF-like 1; calcium-binding domain. 10 disulfides stabilise this stretch: cysteine 91–cysteine 102, cysteine 96–cysteine 111, cysteine 113–cysteine 122, cysteine 132–cysteine 143, cysteine 139–cysteine 153, cysteine 155–cysteine 168, cysteine 176–cysteine 303, cysteine 200–cysteine 205, cysteine 219–cysteine 235, and cysteine 351–cysteine 370. The O-linked (Glc...) serine; alternate glycan is linked to serine 93. Serine 93 carries O-linked (Xyl...) serine; alternate glycosylation. Threonine 101 carries an O-linked (Fuc) threonine glycan. Residue aspartate 104 is modified to (3R)-3-hydroxyaspartate. The EGF-like 2 domain maps to 128 to 169 (EQLICANENGDCDQYCRDHVGTKRTCSCHEDYVLQPDEVSCK). N-linked (GlcNAc...) asparagine glycosylation is present at asparagine 186. One can recognise a Peptidase S1 domain in the interval 194-433 (IVGGYVCPKG…YIDWLVKYMD (240 aa)). Histidine 234 (charge relay system) is an active-site residue. Asparagine 244 carries N-linked (GlcNAc...) asparagine glycosylation. Residue aspartate 283 is the Charge relay system of the active site. Residue aspartate 379 participates in substrate binding. A disulfide bridge connects residues cysteine 381 and cysteine 409. Serine 385 acts as the Charge relay system in catalysis.

Belongs to the peptidase S1 family. In terms of assembly, heterodimer of a light chain and a heavy chain linked by a disulfide bond. Post-translationally, the vitamin K-dependent, enzymatic carboxylation of some glutamate residues allows the modified protein to bind calcium. The iron and 2-oxoglutarate dependent 3-hydroxylation of aspartate and asparagine is (R) stereospecific within EGF domains. In terms of processing, can be either O-glucosylated or O-xylosylated at Ser-93 by POGLUT1. As to expression, plasma.

Its subcellular location is the secreted. It catalyses the reaction Selective cleavage of Arg-|-Ile bond in factor X to form factor Xa.. Its function is as follows. Initiates the extrinsic pathway of blood coagulation. Serine protease that circulates in the blood in a zymogen form. Factor VII is converted to factor VIIa by factor Xa, factor XIIa, factor IXa, or thrombin by minor proteolysis. In the presence of tissue factor and calcium ions, factor VIIa then converts factor X to factor Xa by limited proteolysis. Factor VIIa also converts factor IX to factor IXa in the presence of tissue factor and calcium. In Rattus norvegicus (Rat), this protein is Coagulation factor VII (F7).